Consider the following 503-residue polypeptide: Transcriptional regulator LovE (503 aa).

Residues 1–14 (MAADQGTFTTSVTL) are compositionally biased toward polar residues. Residues 1-21 (MAADQGTFTTSVTLSPVEGSR) form a disordered region. Residues 35–67 (CDRCHAQKIKCTGNKEVTARAPCQRCQQAGLRC) constitute a DNA-binding region (zn(2)-C6 fungal-type). Disordered stretches follow at residues 89-124 (ADPD…RQFL) and 331-362 (SHMN…DTIP). Basic and acidic residues predominate over residues 339–349 (SRSESPSRDDT). The span at 350–359 (SSTSGHSSVD) shows a compositional bias: polar residues.

The protein resides in the nucleus. Transcription factor that regulates the expression of the he gene cluster that mediates the biosynthesis of lovastatin (also known as mevinolin, mevacor or monacolin K), a hypolipidemic inhibitor of (3S)-hydroxymethylglutaryl-coenzyme A (HMG-CoA) reductase (HMGR). The polypeptide is Transcriptional regulator LovE (Aspergillus terreus (strain NIH 2624 / FGSC A1156)).